A 242-amino-acid chain; its full sequence is Ribonuclease 3 (242 aa).

The RNase III domain maps to alanine 18–glycine 146. Position 59 (glutamate 59) interacts with Mg(2+). Aspartate 63 is an active-site residue. Residues aspartate 132 and glutamate 135 each contribute to the Mg(2+) site. Glutamate 135 is an active-site residue. The DRBM domain occupies asparagine 172–leucine 241. Residues arginine 218–alanine 227 are compositionally biased toward basic and acidic residues. A disordered region spans residues arginine 218–proline 242.

The protein belongs to the ribonuclease III family. Homodimer. It depends on Mg(2+) as a cofactor.

The protein localises to the cytoplasm. The enzyme catalyses Endonucleolytic cleavage to 5'-phosphomonoester.. Digests double-stranded RNA. Involved in the processing of primary rRNA transcript to yield the immediate precursors to the large and small rRNAs (23S and 16S). Processes some mRNAs, and tRNAs when they are encoded in the rRNA operon. Processes pre-crRNA and tracrRNA of type II CRISPR loci if present in the organism. The chain is Ribonuclease 3 from Protochlamydia amoebophila (strain UWE25).